A 625-amino-acid polypeptide reads, in one-letter code: Dual specificity protein phosphatase 8 (625 aa).

Residues 23-138 (GPGGPLVIDS…FSSCFPGLCE (116 aa)) form the Rhodanese domain. The Tyrosine-protein phosphatase domain maps to 160-302 (GLTRILPHLY…LLEYERSLKL (143 aa)). The Phosphocysteine intermediate role is filled by C246. Residues 306–586 (LQGDPGTPSG…PAPETQFKRR (281 aa)) form a disordered region. A compositionally biased stretch (basic and acidic residues) spans 380-389 (SSDRLQDTNR). The segment covering 431–448 (AALGLSSPSPDSPDAAPE) has biased composition (low complexity). The span at 555 to 570 (DLRRREAARAEPRDAR) shows a compositional bias: basic and acidic residues.

This sequence belongs to the protein-tyrosine phosphatase family. Non-receptor class dual specificity subfamily. In terms of assembly, monomer. As to expression, abundant in brain, heart and skeletal muscle.

It localises to the cytoplasm. It is found in the nucleus. It carries out the reaction O-phospho-L-tyrosyl-[protein] + H2O = L-tyrosyl-[protein] + phosphate. The enzyme catalyses O-phospho-L-seryl-[protein] + H2O = L-seryl-[protein] + phosphate. It catalyses the reaction O-phospho-L-threonyl-[protein] + H2O = L-threonyl-[protein] + phosphate. Functionally, has phosphatase activity with synthetic phosphatase substrates and negatively regulates mitogen-activated protein kinase activity, presumably by catalysing their dephosphorylation. Expected to display protein phosphatase activity toward phosphotyrosine, phosphoserine and phosphothreonine residues. The chain is Dual specificity protein phosphatase 8 (DUSP8) from Homo sapiens (Human).